The following is a 701-amino-acid chain: Type 3 secretion system secretin (701 aa).

The signal sequence occupies residues 1 to 21 (MRKALMWLPLLLIGLSPATWA). Positions 229-238 (RGNGLAGGGS) are enriched in gly residues. The disordered stretch occupies residues 229 to 252 (RGNGLAGGGSPDTPSLPMSSSGLD). The span at 240 to 252 (DTPSLPMSSSGLD) shows a compositional bias: polar residues.

The protein belongs to the bacterial secretin family. T3SS SctC subfamily. As to quaternary structure, the core secretion machinery of the T3SS is composed of approximately 20 different proteins, including cytoplasmic components, a base, an export apparatus and a needle. This subunit is part of the base, which anchors the injectisome in the bacterial cell envelope. Forms a stable homooligomeric complex.

It localises to the cell outer membrane. Component of the type III secretion system (T3SS), also called injectisome, which is used to inject bacterial effector proteins into eukaryotic host cells. Forms a ring-shaped multimeric structure with an apparent central pore in the outer membrane. Involved in the secretion of a proteinaceous elicitor of the hypersensitivity response in plants. In Pseudomonas syringae pv. syringae, this protein is Type 3 secretion system secretin.